We begin with the raw amino-acid sequence, 877 residues long: Neurotrypsin (877 aa).

The signal sequence occupies residues 1-20; sequence MTLARFVLALVLGALPEVVS. An N-linked (GlcNAc...) asparagine glycan is attached at Asn26. Positions 31–90 are disordered; that stretch reads HRHRHRHSPPPGLQYPYYLPTQQRPPRTRPPPPLPRFPRPPRALPAQRPHALQAGHTPRP. The segment covering 44-55 has biased composition (low complexity); that stretch reads QYPYYLPTQQRP. Residues 58–73 are compositionally biased toward pro residues; the sequence is TRPPPPLPRFPRPPRA. A Kringle domain is found at 95–167; the sequence is CPAGEPWVSV…GKVDWGYCDC (73 aa). 20 disulfides stabilise this stretch: Cys95–Cys167, Cys111–Cys151, Cys140–Cys165, Cys197–Cys261, Cys210–Cys271, Cys241–Cys251, Cys307–Cys371, Cys320–Cys381, Cys351–Cys361, Cys414–Cys477, Cys427–Cys487, Cys457–Cys467, Cys527–Cys591, Cys540–Cys601, Cys571–Cys581, Cys621–Cys752, Cys663–Cys679, Cys767–Cys833, Cys796–Cys810, and Cys823–Cys852. SRCR domains are found at residues 172–273, 282–383, 389–489, and 502–603; these read VRLR…TCSF, IRLV…SCTP, IRLA…ACYP, and VRLM…ICDY. The tract at residues 621 to 632 is zymogen activation region; sequence CGLRLLHRRQKR. The Peptidase S1 domain maps to 633–876; sequence IIGGKNSLRG…FVPWIKSVTK (244 aa). Residue His678 is the Charge relay system of the active site. The N-linked (GlcNAc...) asparagine glycan is linked to Asn685. Catalysis depends on Asp728, which acts as the Charge relay system. Ser827 serves as the catalytic Charge relay system.

The protein belongs to the peptidase S1 family.

Its subcellular location is the secreted. Plays a role in neuronal plasticity and the proteolytic action may subserve structural reorganizations associated with learning and memory operations. In Pongo pygmaeus (Bornean orangutan), this protein is Neurotrypsin (PRSS12).